The primary structure comprises 309 residues: Malate dehydrogenase (309 aa).

Residues 6–11 and aspartate 31 contribute to the NAD(+) site; that span reads GSGRVG. Substrate-binding residues include arginine 80 and arginine 86. NAD(+) contacts are provided by residues asparagine 93 and 116 to 118; that span reads TTN. Residues asparagine 118 and arginine 149 each coordinate substrate. The active-site Proton acceptor is histidine 173.

The protein belongs to the LDH/MDH superfamily. As to quaternary structure, homotetramer.

The catalysed reaction is (S)-malate + NAD(+) = oxaloacetate + NADH + H(+). Catalyzes the reversible oxidation of malate to oxaloacetate. Exhibits higher specific activity for oxaloacetate reduction than for malate oxidation in vitro. Has a strong preference for NAD. Can use NADPH for oxaloacetate reduction, but activity decreases more than 90%. No activity detected with NADP(+) and malate. The sequence is that of Malate dehydrogenase from Pyrobaculum islandicum (strain DSM 4184 / JCM 9189 / GEO3).